The chain runs to 698 residues: MARTTPIERYRNIGICAHVDAGKTTTTERVLFYTGLSHKIGEVHDGAATTDWMVQEQERGITITSAAVTTFWRGMDAQFTEHRINIIDTPGHVDFTIEVERSLRVLDGAVVVFCGSSGVEPQSETVWRQADKYRVPRLVFVNKMDRAGADFERVVKQIRTRLGATCVPIQLNIGAEENFTGVIDLIKMKAINWNEADQGMTFTYEEIPASLAAKAAEMHEYLVEAAAEASDELMDKYLEEGTLSEDEIKKALRQRTINNEIVLATCGSAFKNKGVQAVLDAVVEFLPAPVDVPPIKGIDDDEQEVERPSDDNAPFAALAFKIATDPFVGTLTFIRVYSGVLESGSGVYNSVKQKRERIGRIVQMHANDRTELKEVRAGDIAAAIGLKEVTTGDTLCDPDHKVILERMEFPEPVITIAVEPKSKADQDKMGIALQKLAAEDPSFRVETDEESSQTLISGMGELHLDIIVDRMRREFGVECNVGKPQVAYRETIRASVEAEGKFVRQSGGRGQFGHVWLKLEPNEEGAGYEFINAIVGGVVPREFIPAVDKGIQEQMKNGVLAGFPVLDVKVTLFDGSYHDVDSNEMAFKIAGSMGFKKGALEANPVLLEPCMKVEVTTPENYMGDVVGDLNRRRGLIEGMDDGFGGIKIVHAVVPLSEMFGYATDLRSATQGRASYSMEFLKYSDAPQNIAKAIIESRS.

Residues 8–290 (ERYRNIGICA…AVVEFLPAPV (283 aa)) enclose the tr-type G domain. Residues 17–24 (AHVDAGKT), 88–92 (DTPGH), and 142–145 (NKMD) each bind GTP.

It belongs to the TRAFAC class translation factor GTPase superfamily. Classic translation factor GTPase family. EF-G/EF-2 subfamily.

The protein resides in the cytoplasm. Its function is as follows. Catalyzes the GTP-dependent ribosomal translocation step during translation elongation. During this step, the ribosome changes from the pre-translocational (PRE) to the post-translocational (POST) state as the newly formed A-site-bound peptidyl-tRNA and P-site-bound deacylated tRNA move to the P and E sites, respectively. Catalyzes the coordinated movement of the two tRNA molecules, the mRNA and conformational changes in the ribosome. The protein is Elongation factor G 1 of Shewanella sp. (strain MR-4).